A 227-amino-acid polypeptide reads, in one-letter code: Cytochrome c oxidase subunit 2 (227 aa).

At 1-14 (MAYPFQLGLQDATS) the chain is on the mitochondrial intermembrane side. A helical membrane pass occupies residues 15 to 45 (PIMEELLHFHDHTLMIVFLISSLVLYIISLM). The Mitochondrial matrix segment spans residues 46 to 59 (LTTKLTHTSTMDAQ). The chain crosses the membrane as a helical span at residues 60–87 (EVETVWTILPAIILILIALPSLRILYMM). Residues 88-227 (DEINNPSLTV…YFETWSAVMV (140 aa)) lie on the Mitochondrial intermembrane side of the membrane. His-161, Cys-196, Glu-198, Cys-200, His-204, and Met-207 together coordinate Cu cation. Glu-198 contributes to the Mg(2+) binding site. Tyr-218 is modified (phosphotyrosine).

It belongs to the cytochrome c oxidase subunit 2 family. In terms of assembly, component of the cytochrome c oxidase (complex IV, CIV), a multisubunit enzyme composed of 14 subunits. The complex is composed of a catalytic core of 3 subunits MT-CO1, MT-CO2 and MT-CO3, encoded in the mitochondrial DNA, and 11 supernumerary subunits COX4I, COX5A, COX5B, COX6A, COX6B, COX6C, COX7A, COX7B, COX7C, COX8 and NDUFA4, which are encoded in the nuclear genome. The complex exists as a monomer or a dimer and forms supercomplexes (SCs) in the inner mitochondrial membrane with NADH-ubiquinone oxidoreductase (complex I, CI) and ubiquinol-cytochrome c oxidoreductase (cytochrome b-c1 complex, complex III, CIII), resulting in different assemblies (supercomplex SCI(1)III(2)IV(1) and megacomplex MCI(2)III(2)IV(2)). Found in a complex with TMEM177, COA6, COX18, COX20, SCO1 and SCO2. Interacts with TMEM177 in a COX20-dependent manner. Interacts with COX20. Interacts with COX16. Requires Cu cation as cofactor.

It is found in the mitochondrion inner membrane. It carries out the reaction 4 Fe(II)-[cytochrome c] + O2 + 8 H(+)(in) = 4 Fe(III)-[cytochrome c] + 2 H2O + 4 H(+)(out). Functionally, component of the cytochrome c oxidase, the last enzyme in the mitochondrial electron transport chain which drives oxidative phosphorylation. The respiratory chain contains 3 multisubunit complexes succinate dehydrogenase (complex II, CII), ubiquinol-cytochrome c oxidoreductase (cytochrome b-c1 complex, complex III, CIII) and cytochrome c oxidase (complex IV, CIV), that cooperate to transfer electrons derived from NADH and succinate to molecular oxygen, creating an electrochemical gradient over the inner membrane that drives transmembrane transport and the ATP synthase. Cytochrome c oxidase is the component of the respiratory chain that catalyzes the reduction of oxygen to water. Electrons originating from reduced cytochrome c in the intermembrane space (IMS) are transferred via the dinuclear copper A center (CU(A)) of subunit 2 and heme A of subunit 1 to the active site in subunit 1, a binuclear center (BNC) formed by heme A3 and copper B (CU(B)). The BNC reduces molecular oxygen to 2 water molecules using 4 electrons from cytochrome c in the IMS and 4 protons from the mitochondrial matrix. The chain is Cytochrome c oxidase subunit 2 (MT-CO2) from Lycalopex culpaeus (Culpeo fox).